A 526-amino-acid chain; its full sequence is Cytochrome P450 monooxygenase ucsK (526 aa).

Residues 7 to 27 (PVLAAATAVSFGFYLAGLFVY) form a helical membrane-spanning segment. Asn-403 carries an N-linked (GlcNAc...) asparagine glycan. Residue Cys-467 participates in heme binding.

This sequence belongs to the cytochrome P450 family. The cofactor is heme.

Its subcellular location is the membrane. It participates in mycotoxin biosynthesis. In terms of biological role, cytochrome P450 monooxygenase; part of the gene cluster that mediates the biosynthesis of UCS1025A, a member of the pyrrolizidinone family that acts as a strong telomerase inhibitor and displays potent antibacterial and antitumor properties. These compounds share a hemiaminal-containing pyrrolizidinone core fused with a gamma-lactone, giving a furopyrrolizidine that is connected to a decalin fragment. The polyketide synthase module (PKS) of the PKS-NRPS ucsA is responsible for the synthesis of the polyketide backbone via the condensation of an acetyl-CoA starter unit with 6 malonyl-CoA units. The downstream nonribosomal peptide synthetase (NRPS) module then amidates the carboxyl end of the polyketide with a 2S,3S-methylproline derived from L-isoleucine by the 2-oxoglutarate-dependent dioxygenase ucsF which converts L-isoleucine to (4S,5S)-4-methylpyrroline-5-carboxylate that is further converted to 2S,3S-methylproline by the pyrroline-5-carboxylate reductase ucsG. Reductive release of the completed aminoacyl polyketide from the assembly line can form the 3-pyrrolin-2-one structure via an intramolecular Knoevenagel reaction. Because ucsA lacks a designated enoylreductase (ER) domain, the required activity is provided the enoyl reductase ucsL. This keto acyclic precursor is the substrate of the Diels-Alderase ucsH, that catalyzes the Diels-Alder cycloaddition. Oxidation of the 3S-methyl group to a carboxylate by the cytochrome P450 monooxygenase ucsK allows an oxa-Michael cyclization that might involve the reductase/dehydrogenase ucsI and which furnishes the furopyrrolizidine. The oxidase ucsJ likely plays a critical role in stereoselective reduction of the C5-C6 double bond to afford the required R-configured carboxylate group. Further enolization and oxidation at C5 by an unidentified enzyme affords the last intermediate that can undergo oxa-Michael cyclization to yield UCS1025A. This chain is Cytochrome P450 monooxygenase ucsK, found in Acremonium sp.